Consider the following 205-residue polypeptide: Protein PAXX (205 aa).

Residues 39–81 (FNLYVTDAAELWSTCFSPDSLARLKARFGLSGAEDIHSRFRAA) enclose the PISA domain. Phosphothreonine is present on Thr147. Polar residues predominate over residues 147–159 (TITSPKKNTQPAG). The interval 147–205 (TITSPKKNTQPAGTQFLPELDHQRGSSGPGVRRRCPGESLINPGFKSKKPAAGVDFDET) is disordered. Phosphoserine is present on Ser150. The interval 172-205 (SSGPGVRRRCPGESLINPGFKSKKPAAGVDFDET) is mediates interaction with XRCC5/Ku80 and XRCC6/Ku70 and association with the non-homologous end joining core complex. The short motif at 191-205 (FKSKKPAAGVDFDET) is the XLM element.

It belongs to the XRCC4-XLF family. PAXX subfamily. As to quaternary structure, homodimer. Interacts with the DNA-bound XRCC5/Ku80 and XRCC6/Ku70 heterodimer (Ku complex); the interaction is direct. Associated component of the non-homologous end joining (NHEJ) complex, composed of the core proteins PRKDC, LIG4, XRCC4, XRCC6/Ku70, XRCC5/Ku86 and NHEJ1/XLF. Interacts with POLL (DNA polymerase lambda); promoting POLL recruitment to double-strand breaks (DSBs) and stimulation of the end-filling activity of POLL. Phosphorylation may inhibit interaction with the DNA-bound XRCC5/Ku80 and XRCC6/Ku70 heterodimer (Ku complex).

It localises to the nucleus. Its subcellular location is the chromosome. Its function is as follows. Non-essential DNA repair protein involved in DNA non-homologous end joining (NHEJ); participates in double-strand break (DSB) repair and V(D)J recombination. May act as a scaffold required for accumulation of the Ku heterodimer, composed of XRCC5/Ku80 and XRCC6/Ku70, at double-strand break sites and promote the assembly and/or stability of the NHEJ machinery. Involved in NHEJ by promoting the ligation of blunt-ended DNA ends. Together with NHEJ1/XLF, collaborates with DNA polymerase lambda (POLL) to promote joining of non-cohesive DNA ends. Constitutes a non-essential component of classical NHEJ: has a complementary but distinct function with NHEJ1/XLF in DNA repair. This Mus musculus (Mouse) protein is Protein PAXX.